A 225-amino-acid chain; its full sequence is Imidazoleglycerol-phosphate dehydratase (225 aa).

This sequence belongs to the imidazoleglycerol-phosphate dehydratase family.

The catalysed reaction is D-erythro-1-(imidazol-4-yl)glycerol 3-phosphate = 3-(imidazol-4-yl)-2-oxopropyl phosphate + H2O. The protein operates within amino-acid biosynthesis; L-histidine biosynthesis; L-histidine from 5-phospho-alpha-D-ribose 1-diphosphate: step 6/9. The protein is Imidazoleglycerol-phosphate dehydratase (PTH3) of Pyricularia oryzae (strain 70-15 / ATCC MYA-4617 / FGSC 8958) (Rice blast fungus).